The primary structure comprises 466 residues: Cytochrome c-552 (466 aa).

An N-terminal signal peptide occupies residues 1–27 (MVRILTKKSFALSALVAASLMASGAMA). Heme c is bound at residue histidine 87. 3 residues coordinate heme: cysteine 115, cysteine 118, and lysine 119. Heme c is bound by residues cysteine 153, cysteine 156, histidine 157, cysteine 195, cysteine 198, and histidine 199. Glutamate 201, tyrosine 202, lysine 250, and glutamine 252 together coordinate Ca(2+). Tyrosine 202 lines the substrate pocket. Histidine 253 provides a ligand contact to substrate. Heme c-binding residues include histidine 264, cysteine 271, cysteine 274, histidine 275, histidine 290, cysteine 303, cysteine 306, histidine 307, and histidine 382.

This sequence belongs to the cytochrome c-552 family. It depends on Ca(2+) as a cofactor. Heme c is required as a cofactor.

The protein resides in the periplasm. The catalysed reaction is 6 Fe(III)-[cytochrome c] + NH4(+) + 2 H2O = 6 Fe(II)-[cytochrome c] + nitrite + 8 H(+). It functions in the pathway nitrogen metabolism; nitrate reduction (assimilation). Functionally, catalyzes the reduction of nitrite to ammonia, consuming six electrons in the process. This Shewanella woodyi (strain ATCC 51908 / MS32) protein is Cytochrome c-552.